The primary structure comprises 332 residues: PTS-dependent dihydroxyacetone kinase, dihydroxyacetone-binding subunit DhaK (332 aa).

Positions 9-331 (QPQDVVSEML…LNEDVKTISW (323 aa)) constitute a DhaK domain. Dihydroxyacetone contacts are provided by residues 55–58 (GSGH), lysine 106, and aspartate 111. Histidine 58 functions as the Proton acceptor in the catalytic mechanism. Residue histidine 220 is the Tele-hemiaminal-histidine intermediate of the active site.

Homodimer. The dihydroxyacetone kinase complex is composed of a homodimer of DhaM, a homodimer of DhaK and the subunit DhaL.

The catalysed reaction is dihydroxyacetone + phosphoenolpyruvate = dihydroxyacetone phosphate + pyruvate. It functions in the pathway polyol metabolism; glycerol degradation. Functionally, dihydroxyacetone binding subunit of the dihydroxyacetone kinase, which is responsible the phosphoenolpyruvate (PEP)-dependent phosphorylation of dihydroxyacetone via a phosphoryl group transfer from DhaL-ATP. This Lactococcus lactis subsp. lactis (strain IL1403) (Streptococcus lactis) protein is PTS-dependent dihydroxyacetone kinase, dihydroxyacetone-binding subunit DhaK.